A 116-amino-acid chain; its full sequence is Large ribosomal subunit protein bL17 (116 aa).

Belongs to the bacterial ribosomal protein bL17 family. In terms of assembly, part of the 50S ribosomal subunit. Contacts protein L32.

The protein is Large ribosomal subunit protein bL17 of Prochlorococcus marinus (strain MIT 9301).